Consider the following 354-residue polypeptide: MTGDNLVSAYVSDAERDVEASVRPRRLAEFIAQERVRDQLDLLLQGALRRGSPPDHILLSGPPGLGKTSLANIVAAELGTSIRVTSGPAIERSGDLAAILTSLGEGDVLFIDEVHRIARPAEELLYSAMEDFRVDVVVGKGPGATAIPLDVEPFTLVGATTRAGLLTGPMRDRFGFVAHLDFYSPADLETLLNRSARILGVPITADGAAEISGRARGTPRIANRLLRRVRDFAEVRADGVVTRETAQAALTVYDVDALGLDRLDRAVLTALVDLFRGGPVGLSTLAVAVGEQPDTVEEVCEPFLVRAGLLARTPRGRVATEAAWHHLGRTPANGTFGPDVPPARDLFSVEPDQP.

The large ATPase domain (RuvB-L) stretch occupies residues 1–183 (MTGDNLVSAY…FGFVAHLDFY (183 aa)). Residues Arg23, Gly64, Lys67, Thr68, Ser69, 130–132 (EDF), Arg173, Tyr183, and Arg220 each bind ATP. Residue Thr68 coordinates Mg(2+). Positions 184 to 254 (SPADLETLLN…TAQAALTVYD (71 aa)) are small ATPAse domain (RuvB-S). Residues 257–354 (ALGLDRLDRA…DLFSVEPDQP (98 aa)) are head domain (RuvB-H). Arg312 and Arg317 together coordinate DNA.

This sequence belongs to the RuvB family. In terms of assembly, homohexamer. Forms an RuvA(8)-RuvB(12)-Holliday junction (HJ) complex. HJ DNA is sandwiched between 2 RuvA tetramers; dsDNA enters through RuvA and exits via RuvB. An RuvB hexamer assembles on each DNA strand where it exits the tetramer. Each RuvB hexamer is contacted by two RuvA subunits (via domain III) on 2 adjacent RuvB subunits; this complex drives branch migration. In the full resolvosome a probable DNA-RuvA(4)-RuvB(12)-RuvC(2) complex forms which resolves the HJ.

Its subcellular location is the cytoplasm. The catalysed reaction is ATP + H2O = ADP + phosphate + H(+). The RuvA-RuvB-RuvC complex processes Holliday junction (HJ) DNA during genetic recombination and DNA repair, while the RuvA-RuvB complex plays an important role in the rescue of blocked DNA replication forks via replication fork reversal (RFR). RuvA specifically binds to HJ cruciform DNA, conferring on it an open structure. The RuvB hexamer acts as an ATP-dependent pump, pulling dsDNA into and through the RuvAB complex. RuvB forms 2 homohexamers on either side of HJ DNA bound by 1 or 2 RuvA tetramers; 4 subunits per hexamer contact DNA at a time. Coordinated motions by a converter formed by DNA-disengaged RuvB subunits stimulates ATP hydrolysis and nucleotide exchange. Immobilization of the converter enables RuvB to convert the ATP-contained energy into a lever motion, pulling 2 nucleotides of DNA out of the RuvA tetramer per ATP hydrolyzed, thus driving DNA branch migration. The RuvB motors rotate together with the DNA substrate, which together with the progressing nucleotide cycle form the mechanistic basis for DNA recombination by continuous HJ branch migration. Branch migration allows RuvC to scan DNA until it finds its consensus sequence, where it cleaves and resolves cruciform DNA. The protein is Holliday junction branch migration complex subunit RuvB of Salinispora tropica (strain ATCC BAA-916 / DSM 44818 / JCM 13857 / NBRC 105044 / CNB-440).